We begin with the raw amino-acid sequence, 173 residues long: Ribulose bisphosphate carboxylase small subunit, chloroplastic 7 (173 aa).

A chloroplast-targeting transit peptide spans 1–49 (MASIPATVATVAQANMVAPFTGLKSNAAFPVTKKVNDFSTLASNGGRVQ).

Belongs to the RuBisCO small chain family. Heterohexadecamer of 8 large and 8 small subunits.

It localises to the plastid. It is found in the chloroplast. RuBisCO catalyzes two reactions: the carboxylation of D-ribulose 1,5-bisphosphate, the primary event in carbon dioxide fixation, as well as the oxidative fragmentation of the pentose substrate. Both reactions occur simultaneously and in competition at the same active site. Although the small subunit is not catalytic it is essential for maximal activity. This is Ribulose bisphosphate carboxylase small subunit, chloroplastic 7 from Flaveria pringlei.